A 21-amino-acid polypeptide reads, in one-letter code: Peptide PGLa-B2 (21 aa).

Leu21 carries the post-translational modification Leucine amide.

Expressed by the skin glands.

It is found in the secreted. Its function is as follows. Has antimicrobial activity against Gram-negative bacterium E.coli ATCC 25922 (MIC=25 uM), Gram-positive bacterium S.auerus ATCC 25923 (MIC=50 uM) and against fungus C.albicans ATCC 90028 (MIC=25 uM). Has some hemolytic activity against human erythrocytes at high concentration. This chain is Peptide PGLa-B2, found in Xenopus borealis (Kenyan clawed frog).